The following is an 89-amino-acid chain: Small ribosomal subunit protein uS14A (89 aa).

It belongs to the universal ribosomal protein uS14 family. As to quaternary structure, part of the 30S ribosomal subunit. Contacts proteins S3 and S10.

Its function is as follows. Binds 16S rRNA, required for the assembly of 30S particles and may also be responsible for determining the conformation of the 16S rRNA at the A site. The protein is Small ribosomal subunit protein uS14A of Limosilactobacillus reuteri (strain DSM 20016) (Lactobacillus reuteri).